We begin with the raw amino-acid sequence, 318 residues long: NADH-ubiquinone oxidoreductase chain 1 (318 aa).

Transmembrane regions (helical) follow at residues 2–22, 37–57, 69–89, 100–120, 136–156, 171–191, 231–251, 253–273, and 293–313; these read FLMN…FLTL, PNIV…KLFI, LMFT…WIPM, LGVL…LWSG, VAQT…IMMM, HMWL…STLA, IIMM…NPLF, ELFT…FLWV, and FLPL…LSAG.

It belongs to the complex I subunit 1 family. In terms of assembly, core subunit of respiratory chain NADH dehydrogenase (Complex I) which is composed of 45 different subunits.

Its subcellular location is the mitochondrion inner membrane. It carries out the reaction a ubiquinone + NADH + 5 H(+)(in) = a ubiquinol + NAD(+) + 4 H(+)(out). Functionally, core subunit of the mitochondrial membrane respiratory chain NADH dehydrogenase (Complex I) which catalyzes electron transfer from NADH through the respiratory chain, using ubiquinone as an electron acceptor. Essential for the catalytic activity and assembly of complex I. This Euphractus sexcinctus (Six-banded armadillo) protein is NADH-ubiquinone oxidoreductase chain 1 (MT-ND1).